A 584-amino-acid polypeptide reads, in one-letter code: uncharacterized protein (584 aa).

Disordered stretches follow at residues 151 to 188 (EHPP…DNDL), 222 to 243 (KRKE…SRAN), 399 to 418 (SETP…PPDF), and 433 to 584 (MQPS…AKSD). Over residues 159 to 188 (TSSEKTRSENRERKKRWREQNEERNKDNDL) the composition is skewed to basic and acidic residues. Residues 231–243 (LSQNQSSNASRAN) are compositionally biased toward low complexity. Composition is skewed to polar residues over residues 399–409 (SETPTPVSGNG), 433–453 (MQPS…SSEM), 483–500 (NAVT…SGSP), 511–531 (NYSQ…SSLP), and 572–584 (QRSS…AKSD).

This is an uncharacterized protein from Schizosaccharomyces pombe (strain 972 / ATCC 24843) (Fission yeast).